A 1228-amino-acid chain; its full sequence is DNA-directed RNA polymerase subunit beta (1228 aa).

Belongs to the RNA polymerase beta chain family. The RNAP catalytic core consists of 2 alpha, 1 beta, 1 beta' and 1 omega subunit. When a sigma factor is associated with the core the holoenzyme is formed, which can initiate transcription.

It carries out the reaction RNA(n) + a ribonucleoside 5'-triphosphate = RNA(n+1) + diphosphate. Its function is as follows. DNA-dependent RNA polymerase catalyzes the transcription of DNA into RNA using the four ribonucleoside triphosphates as substrates. This Leptospira biflexa protein is DNA-directed RNA polymerase subunit beta.